A 699-amino-acid chain; its full sequence is Protein Scribble homolog let-413 (699 aa).

LRR repeat units lie at residues K37 to R59, H60 to L81, Q83 to C104, L106 to C127, S129 to L150, N152 to R174, K175 to L196, S198 to C219, M221 to M242, N244 to L265, R267 to C288, S290 to L311, Q313 to C334, S336 to C357, N359 to L380, and K382 to R403. Residues A584–S665 enclose the PDZ domain. Positions R656 to S699 are disordered. 2 stretches are compositionally biased toward polar residues: residues S659–L676 and P684–S699.

This sequence belongs to the LAP (LRR and PDZ) protein family. As to expression, expressed in the terminal web of the intestine. Expressed in seam cells. Expressed in the basolateral surfaces of epithelia and the nervous system. Expressed in the intestine, epidermis, excretory canal, reproductive system including vulva, uterus and spermatheca, in both larval and adult stage animals.

The protein localises to the basolateral cell membrane. Its function is as follows. Critical role in assembling adherens junctions; adapter protein involved in polarizing protein trafficking in epithelial cells. Necessary to maintain, not establish, the entire terminal web (organelle-depleted, intermediate filament-rich layer of cytoplasm that underlies the apical microvilli of polarized epithelial cells) or brush border assembly at the apical surface gut cells. Required for correct localization of ifb-2 intermediate filaments in the terminal web. Required for dlg-1 and hmr-1 lateral localization. Maintains cell polarity by correctly positioning adherens junction protein components including ajm-1 and hmp-1 at discrete subapical positions. Plays a role in the correct localization of the dlg-1-ajm-1 complex, polarity protein par-3, and actin microfilament to the apical junction of spermatheca cells, and is required for ovulation. Regulates the establishment of newly-formed epithelia in conjunction with dlg-1. Required in the epidermis during larval development. Plays a role in cellular junction integrity and in the directed outgrowth of seam cells, towards neighboring seam cells, during larval development; probably acts by promoting the assembly and stability of dlg-1 at apical junctions. This chain is Protein Scribble homolog let-413, found in Caenorhabditis elegans.